Reading from the N-terminus, the 232-residue chain is Thiamine import ATP-binding protein ThiQ (232 aa).

Residues 2–230 (LKLTDITWLY…KASASALLGI (229 aa)) form the ABC transporter domain. Position 32–39 (32–39 (GPSGAGKS)) interacts with ATP.

This sequence belongs to the ABC transporter superfamily. Thiamine importer (TC 3.A.1.19.1) family. In terms of assembly, the complex is composed of two ATP-binding proteins (ThiQ), two transmembrane proteins (ThiP) and a solute-binding protein (ThiB).

The protein localises to the cell inner membrane. The enzyme catalyses thiamine(out) + ATP + H2O = thiamine(in) + ADP + phosphate + H(+). Its function is as follows. Part of the ABC transporter complex ThiBPQ involved in thiamine import. Responsible for energy coupling to the transport system. This chain is Thiamine import ATP-binding protein ThiQ, found in Escherichia coli (strain UTI89 / UPEC).